Consider the following 224-residue polypeptide: Acyl-protein thioesterase 1 (224 aa).

Active-site charge relay system residues include S116, D170, and H203.

The protein belongs to the AB hydrolase superfamily. AB hydrolase 2 family.

It localises to the cytoplasm. The protein localises to the nucleus. It carries out the reaction S-hexadecanoyl-L-cysteinyl-[protein] + H2O = L-cysteinyl-[protein] + hexadecanoate + H(+). Its function is as follows. Hydrolyzes fatty acids from S-acylated cysteine residues in proteins with a strong preference for palmitoylated G-alpha proteins over other acyl substrates. Mediates the deacylation of G-alpha proteins such as GPA1 in vivo, but has weak or no activity toward palmitoylated Ras proteins. Has weak lysophospholipase activity in vitro; however such activity may not exist in vivo. This Schizosaccharomyces pombe (strain 972 / ATCC 24843) (Fission yeast) protein is Acyl-protein thioesterase 1.